Here is a 322-residue protein sequence, read N- to C-terminus: Methionyl-tRNA formyltransferase (322 aa).

112–115 (SLLP) provides a ligand contact to (6S)-5,6,7,8-tetrahydrofolate.

The protein belongs to the Fmt family.

It carries out the reaction L-methionyl-tRNA(fMet) + (6R)-10-formyltetrahydrofolate = N-formyl-L-methionyl-tRNA(fMet) + (6S)-5,6,7,8-tetrahydrofolate + H(+). Functionally, attaches a formyl group to the free amino group of methionyl-tRNA(fMet). The formyl group appears to play a dual role in the initiator identity of N-formylmethionyl-tRNA by promoting its recognition by IF2 and preventing the misappropriation of this tRNA by the elongation apparatus. The sequence is that of Methionyl-tRNA formyltransferase from Synechococcus sp. (strain JA-3-3Ab) (Cyanobacteria bacterium Yellowstone A-Prime).